The following is a 361-amino-acid chain: tRNA 2-selenouridine synthase (361 aa).

The 124-residue stretch at Leu14–Ile137 folds into the Rhodanese domain. Residue Cys97 is the S-selanylcysteine intermediate of the active site.

It belongs to the SelU family. Monomer.

The enzyme catalyses 5-methylaminomethyl-2-thiouridine(34) in tRNA + selenophosphate + (2E)-geranyl diphosphate + H2O + H(+) = 5-methylaminomethyl-2-selenouridine(34) in tRNA + (2E)-thiogeraniol + phosphate + diphosphate. It carries out the reaction 5-methylaminomethyl-2-thiouridine(34) in tRNA + (2E)-geranyl diphosphate = 5-methylaminomethyl-S-(2E)-geranyl-thiouridine(34) in tRNA + diphosphate. It catalyses the reaction 5-methylaminomethyl-S-(2E)-geranyl-thiouridine(34) in tRNA + selenophosphate + H(+) = 5-methylaminomethyl-2-(Se-phospho)selenouridine(34) in tRNA + (2E)-thiogeraniol. The catalysed reaction is 5-methylaminomethyl-2-(Se-phospho)selenouridine(34) in tRNA + H2O = 5-methylaminomethyl-2-selenouridine(34) in tRNA + phosphate. In terms of biological role, involved in the post-transcriptional modification of the uridine at the wobble position (U34) of tRNA(Lys), tRNA(Glu) and tRNA(Gln). Catalyzes the conversion of 2-thiouridine (S2U-RNA) to 2-selenouridine (Se2U-RNA). Acts in a two-step process involving geranylation of 2-thiouridine (S2U) to S-geranyl-2-thiouridine (geS2U) and subsequent selenation of the latter derivative to 2-selenouridine (Se2U) in the tRNA chain. The polypeptide is tRNA 2-selenouridine synthase (Escherichia coli O6:H1 (strain CFT073 / ATCC 700928 / UPEC)).